The primary structure comprises 115 residues: Holo-[acyl-carrier-protein] synthase (115 aa).

Residues aspartate 6 and glutamate 51 each contribute to the Mg(2+) site.

It belongs to the P-Pant transferase superfamily. AcpS family. The cofactor is Mg(2+).

It localises to the cytoplasm. It carries out the reaction apo-[ACP] + CoA = holo-[ACP] + adenosine 3',5'-bisphosphate + H(+). Functionally, transfers the 4'-phosphopantetheine moiety from coenzyme A to a Ser of acyl-carrier-protein. The polypeptide is Holo-[acyl-carrier-protein] synthase (Campylobacter jejuni subsp. jejuni serotype O:23/36 (strain 81-176)).